A 99-amino-acid polypeptide reads, in one-letter code: Keratinocyte differentiation-associated protein (99 aa).

The first 22 residues, 1-22, serve as a signal peptide directing secretion; the sequence is MKIPVLPAVVLLSLLVLHSAQG.

In terms of tissue distribution, highly expressed in skin and detected at lower levels in thymus. In skin, found exclusively in lamellar granules of granular keratinocytes and in the intracellular space of the stratum corneum. Also highly expressed in oral mucosa, tongue, esophagus, and stomach, and at much lower levels in bladder and uterus. Not detected in gastrointestinal mucosa.

The protein resides in the secreted. In terms of biological role, may act as a soluble regulator of keratinocyte differentiation. May play an important role in embryonic skin morphogenesis. This Homo sapiens (Human) protein is Keratinocyte differentiation-associated protein (KRTDAP).